Consider the following 87-residue polypeptide: U14-lycotoxin-Ls1a (87 aa).

An N-terminal signal peptide occupies residues 1-20 (MNSKVFAVLLLLALLTCVLS). Residues 21-66 (EKYCPTPRNTSCKKMNIRNNCCRDSDCTSNAFCCAEPCGNFCHKAS) form the WAP domain. 5 disulfide bridges follow: C24-C54, C32-C58, C41-C53, C42-C80, and C47-C62.

Belongs to the venom protein 11 family. 01 (wap-1) subfamily. In terms of processing, contains 5 disulfide bonds. In terms of tissue distribution, expressed by the venom gland.

The protein resides in the secreted. Has antibacterial activity. The polypeptide is U14-lycotoxin-Ls1a (Lycosa singoriensis (Wolf spider)).